A 142-amino-acid chain; its full sequence is Large ribosomal subunit protein uL13 (142 aa).

The protein belongs to the universal ribosomal protein uL13 family. In terms of assembly, part of the 50S ribosomal subunit.

Its function is as follows. This protein is one of the early assembly proteins of the 50S ribosomal subunit, although it is not seen to bind rRNA by itself. It is important during the early stages of 50S assembly. In Herminiimonas arsenicoxydans, this protein is Large ribosomal subunit protein uL13.